Reading from the N-terminus, the 126-residue chain is CD59 glycoprotein (126 aa).

The signal sequence occupies residues 1–25 (MGIQGGSVLFGLLLALAVFCHSGHS). The UPAR/Ly6 domain maps to 26–106 (LQCYNCPNPT…QLENGGTSLS (81 aa)). 5 cysteine pairs are disulfide-bonded: cysteine 28–cysteine 51, cysteine 31–cysteine 38, cysteine 44–cysteine 64, cysteine 70–cysteine 88, and cysteine 89–cysteine 94. Residue asparagine 43 is glycosylated (N-linked (GlcNAc...) asparagine). A lipid anchor (GPI-anchor amidated asparagine) is attached at asparagine 100. A propeptide spans 101 to 126 (GGTSLSEKTVLLLVTPLLAAAWCLHP) (removed in mature form).

As to quaternary structure, interacts with T-cell surface antigen CD2. Post-translationally, N- and O-glycosylated.

Its subcellular location is the cell membrane. The protein resides in the secreted. In terms of biological role, potent inhibitor of the complement membrane attack complex (MAC) action, which protects self-cells from damage during complement activation. Acts by binding to the beta-haipins of C8 (C8A and C8B) components of the assembling MAC, forming an intermolecular beta-sheet that prevents incorporation of the multiple copies of C9 required for complete formation of the osmolytic pore. The polypeptide is CD59 glycoprotein (Papio sp. (Baboon)).